The following is a 377-amino-acid chain: MRRLNRRKTLSLVKELDAFPKVPDSYVETSASGGTVSLIAFTTMALLTIMEFSVYQDTWMKYEYEVDKDFSSKLRINIDITVAMKCHYVGADVLDLAETMVASADGLAYEPALFDLSPQQREWQRMLQLIQSRLQEEHSLQDVIFKSAFKSASTALPPREDDSSLTPDACRIHGHLYVNKVAGNFHITVGKAIPHPRGHAHLAALVNHDSYNFSHRIDHLSFGELVPGIINPLDGTEKIAVDHNQMFQYFITVVPTKLHTYKISADTHQFSVTERERIINHAAGSHGVSGIFMKYDLSSLMVTVTEEHMPFWQFFVRLCGIIGGIFSTTGMLHGIGKFIVEIICCRFRLGSYKPVRSVPFADGHTDNHLPLLENNTH.

The Cytoplasmic portion of the chain corresponds to 1-33; it reads MRRLNRRKTLSLVKELDAFPKVPDSYVETSASG. A helical membrane pass occupies residues 34 to 54; that stretch reads GTVSLIAFTTMALLTIMEFSV. The Lumenal portion of the chain corresponds to 55–319; that stretch reads YQDTWMKYEY…PFWQFFVRLC (265 aa). Residues 320 to 340 traverse the membrane as a helical segment; that stretch reads GIIGGIFSTTGMLHGIGKFIV. At 341 to 377 the chain is on the cytoplasmic side; it reads EIICCRFRLGSYKPVRSVPFADGHTDNHLPLLENNTH.

This sequence belongs to the ERGIC family. As to quaternary structure, may form a heteromeric complex composed of ERGIC1, ERGIC2 and ERGIC3. Interacts with ERGIC3, the interaction is required for the stable expression of both proteins. May interact with EEF1A1.

It is found in the endoplasmic reticulum-Golgi intermediate compartment membrane. It localises to the golgi apparatus. The protein resides in the cis-Golgi network membrane. The protein localises to the endoplasmic reticulum membrane. Its subcellular location is the cytoplasm. It is found in the nucleus. Functionally, possible role in transport between endoplasmic reticulum and Golgi. This is Endoplasmic reticulum-Golgi intermediate compartment protein 2 (Ergic2) from Mus musculus (Mouse).